Consider the following 901-residue polypeptide: Protein translocase subunit SecA (901 aa).

ATP contacts are provided by residues glutamine 87, 105-109, and aspartate 512; that span reads GEGKT. The interval 852–901 is disordered; that stretch reads AQMQQLSHQDDDSAAAAALAAQTGDRKVGRNDPCPCGSGKKYKQCHGRLS. 4 residues coordinate Zn(2+): cysteine 885, cysteine 887, cysteine 896, and histidine 897. A compositionally biased stretch (basic residues) spans 891–901; sequence KKYKQCHGRLS.

Belongs to the SecA family. In terms of assembly, monomer and homodimer. Part of the essential Sec protein translocation apparatus which comprises SecA, SecYEG and auxiliary proteins SecDF-YajC and YidC. Requires Zn(2+) as cofactor.

It is found in the cell inner membrane. It localises to the cytoplasm. The enzyme catalyses ATP + H2O + cellular proteinSide 1 = ADP + phosphate + cellular proteinSide 2.. Part of the Sec protein translocase complex. Interacts with the SecYEG preprotein conducting channel. Has a central role in coupling the hydrolysis of ATP to the transfer of proteins into and across the cell membrane, serving both as a receptor for the preprotein-SecB complex and as an ATP-driven molecular motor driving the stepwise translocation of polypeptide chains across the membrane. This is Protein translocase subunit SecA from Citrobacter koseri (strain ATCC BAA-895 / CDC 4225-83 / SGSC4696).